Here is a 185-residue protein sequence, read N- to C-terminus: Ribosome-recycling factor (185 aa).

This sequence belongs to the RRF family.

The protein localises to the cytoplasm. In terms of biological role, responsible for the release of ribosomes from messenger RNA at the termination of protein biosynthesis. May increase the efficiency of translation by recycling ribosomes from one round of translation to another. This chain is Ribosome-recycling factor, found in Wigglesworthia glossinidia brevipalpis.